A 266-amino-acid polypeptide reads, in one-letter code: 14-3-3 protein homolog (266 aa).

The disordered stretch occupies residues 154-177 (KQAADQAQESYQKATETAEGHSPA). The span at 158 to 168 (DQAQESYQKAT) shows a compositional bias: polar residues.

It belongs to the 14-3-3 family.

The protein is 14-3-3 protein homolog of Neospora caninum (Coccidian parasite).